Reading from the N-terminus, the 156-residue chain is MLMSKKNRVMIYEYLFKEGVLVAKKDFHLPKHGEIDVPNLHVIRAMQSLVSRGYVKEQFCWRHYYWYLQNEGIQYLRDFLHLPPEIVPATLKRQTRPEAARPRPKEGAPRAQVGEDRAGYRRGFGGSDKKGEAGAGADTNFQFRGGFGRGRQEQEE.

The disordered stretch occupies residues 91–156 (LKRQTRPEAA…FGRGRQEQEE (66 aa)). Basic and acidic residues predominate over residues 95–119 (TRPEAARPRPKEGAPRAQVGEDRAG).

It belongs to the eukaryotic ribosomal protein eS10 family.

The protein resides in the cytoplasm. This Lumbricus rubellus (Humus earthworm) protein is Small ribosomal subunit protein eS10 (RPS10).